The sequence spans 465 residues: Lysosomal dipeptide transporter MFSD1 (465 aa).

Residues 1–23 are disordered; that stretch reads MEEEDEEARALLAGGPDEADRGA. Residues 11–12 carry the Dileucine internalization motif motif; it reads LL. Transmembrane regions (helical) follow at residues 39 to 59, 83 to 103, 113 to 133, 135 to 155, 170 to 191, 213 to 233, 266 to 286, 304 to 324, 331 to 351, 361 to 381, 392 to 412, and 418 to 438; these read LVHR…SYFC, LLYA…GFLI, TIIF…GGIF, AFWL…SLAV, LNLV…NMNL, ITLM…LALA, LWLI…FIGL, AINS…GLLV, IIWV…LAFT, LLGL…AFVV, FMQS…GMIL, and LFLE…VVLL.

Belongs to the major facilitator superfamily. Homodimer. Interacts with lysosomal protein GLMP (via lumenal domain); the interaction starts while both proteins are still in the endoplasmic reticulum and is required for stabilization of MFSD1 in lysosomes but has no direct effect on its targeting to lysosomes or transporter activity.

It is found in the lysosome membrane. It carries out the reaction L-alpha-aminoacyl-L-arginine(out) = L-alpha-aminoacyl-L-arginine(in). It catalyses the reaction L-arginyl-L-alpha-amino acid(out) = L-arginyl-L-alpha-amino acid(in). The catalysed reaction is L-arginyl-glycine(out) = L-arginyl-glycine(in). The enzyme catalyses L-alpha-aminoacyl-L-lysine(out) = L-alpha-aminoacyl-L-lysine(in). It carries out the reaction L-aspartyl-L-lysine(out) = L-aspartyl-L-lysine(in). It catalyses the reaction L-alanyl-L-lysine(out) = L-alanyl-L-lysine(in). The catalysed reaction is L-lysyl-L-alpha-amino acid(out) = L-lysyl-L-alpha-amino acid(in). The enzyme catalyses L-lysyl-L-alanine(out) = L-lysyl-L-alanine(in). It carries out the reaction L-lysyl-L-lysine(out) = L-lysyl-L-lysine(in). It catalyses the reaction L-lysyl-glycine(out) = L-lysyl-glycine(in). The catalysed reaction is L-alpha-aminoacyl-L-histidine(out) = L-alpha-aminoacyl-L-histidine(in). The enzyme catalyses L-histidyl-L-alpha-amino acid(out) = L-histidyl-L-alpha-amino acid(in). It carries out the reaction L-histidyl-glycine(out) = L-histidyl-glycine(in). Functionally, lysosomal dipeptide uniporter that selectively exports lysine, arginine or histidine-containing dipeptides with a net positive charge from the lysosome lumen into the cytosol. Could play a role in a specific type of protein O-glycosylation indirectly regulating macrophages migration and tissue invasion. Also essential for liver homeostasis. In Pongo abelii (Sumatran orangutan), this protein is Lysosomal dipeptide transporter MFSD1.